Reading from the N-terminus, the 513-residue chain is GMP synthase [glutamine-hydrolyzing] (513 aa).

The 191-residue stretch at 8–198 (MILVLDFGSQ…VFGVCECEGE (191 aa)) folds into the Glutamine amidotransferase type-1 domain. Cys85 functions as the Nucleophile in the catalytic mechanism. Residues His172 and Glu174 contribute to the active site. Residues 199–388 (WSMENFIEIE…LGIPDEIVWR (190 aa)) enclose the GMPS ATP-PPase domain. 227–233 (GGVDSSV) is an ATP binding site.

In terms of assembly, homodimer.

It carries out the reaction XMP + L-glutamine + ATP + H2O = GMP + L-glutamate + AMP + diphosphate + 2 H(+). Its pathway is purine metabolism; GMP biosynthesis; GMP from XMP (L-Gln route): step 1/1. Catalyzes the synthesis of GMP from XMP. In Bacillus subtilis (strain 168), this protein is GMP synthase [glutamine-hydrolyzing] (guaA).